Reading from the N-terminus, the 190-residue chain is MESMVNDPTVAMFASLFVALVLAAAAIPKLRSQDEFLGVVANYKLLPGFLVAPFAKLLPWLELGCAIALLVPSLRVLAACVAAALFMLFSFAIAVNVGRGRTHIDCGCVRRPTSMSRIGMFHVLRALALAGMSLYVAAVPLEISGISIESALTALASAVMLSLIYMAADLMVGFPATKHKLEIYKGNSND.

5 consecutive transmembrane segments (helical) span residues 8–28, 49–69, 77–97, 126–146, and 154–174; these read PTVA…AAIP, FLVA…AIAL, LAAC…AVNV, ALAL…ISGI, and ALAS…MVGF.

The protein localises to the cell membrane. Its pathway is one-carbon metabolism; methylamine degradation. In terms of biological role, may be specifically involved in the processing, transport, and/or maturation of the MADH beta-subunit. The sequence is that of Methylamine utilization protein MauE (mauE) from Methylophilus methylotrophus (Bacterium W3A1).